We begin with the raw amino-acid sequence, 147 residues long: Hemoglobin subunit epsilon (147 aa).

One can recognise a Globin domain in the interval 3 to 147; it reads HFTAEEKAAI…VAIALGHKYH (145 aa). 2 positions are modified to phosphoserine: serine 14 and serine 51. Positions 64 and 93 each coordinate heme b.

It belongs to the globin family. As to quaternary structure, heterotetramer of two alpha chains and two epsilon chains in early embryonic hemoglobin Gower-2; two zeta chains and two epsilon chains in early embryonic hemoglobin Gower-1. In terms of tissue distribution, red blood cells.

In terms of biological role, the epsilon chain is a beta-type chain of early mammalian embryonic hemoglobin. This Alouatta belzebul (Red-handed howler monkey) protein is Hemoglobin subunit epsilon (HBE1).